The sequence spans 1071 residues: DNA-directed RNA polymerase subunit beta (1071 aa).

The protein belongs to the RNA polymerase beta chain family. In terms of assembly, in plastids the minimal PEP RNA polymerase catalytic core is composed of four subunits: alpha, beta, beta', and beta''. When a (nuclear-encoded) sigma factor is associated with the core the holoenzyme is formed, which can initiate transcription.

It localises to the plastid. Its subcellular location is the chloroplast. The catalysed reaction is RNA(n) + a ribonucleoside 5'-triphosphate = RNA(n+1) + diphosphate. Its function is as follows. DNA-dependent RNA polymerase catalyzes the transcription of DNA into RNA using the four ribonucleoside triphosphates as substrates. This chain is DNA-directed RNA polymerase subunit beta, found in Nymphaea alba (White water-lily).